Here is a 520-residue protein sequence, read N- to C-terminus: Beta-galactoside-specific lectin 4 (520 aa).

The N-linked (GlcNAc...) asparagine glycan is linked to Asn107. Glu159 is an active-site residue. The cysteines at positions 240 and 266 are disulfide-linked. Residues 241 to 265 constitute a propeptide, connecting peptide; that stretch reads GERPSSSDVRYWPLVIRPVIADDVT. The Ricin B-type lectin 1 domain occupies 269 to 396; sequence SEPTVRIVGR…YTLGQGWLAG (128 aa). 284-286 contributes to the D-galactose binding site; that stretch reads DVR. The N-linked (GlcNAc...) asparagine glycan is linked to Asn322. Cys325 and Cys342 are joined by a disulfide. Asn357 and Asn397 each carry an N-linked (GlcNAc...) asparagine glycan. The 121-residue stretch at 400-520 folds into the Ricin B-type lectin 2 domain; the sequence is APREVTIYGF…KPNQMWLPVP (121 aa). Intrachain disulfides connect Cys413-Cys426 and Cys451-Cys467. A D-galactose-binding site is contributed by 494 to 496; the sequence is DVA.

This sequence belongs to the ribosome-inactivating protein family. Type 2 RIP subfamily. As to quaternary structure, disulfide-linked dimer of A and B chains.

The enzyme catalyses Endohydrolysis of the N-glycosidic bond at one specific adenosine on the 28S rRNA.. Its function is as follows. The A chain is responsible for inhibiting protein synthesis through the catalytic inactivation of 60S ribosomal subunits by removing adenine from position 4,324 of 28S rRNA. The B chain binds to cell receptors and probably facilitates the entry into the cell of the A chain; B chains are also responsible for cell agglutination (lectin activity). Inhibits growth of the human tumor cell line Molt4. The polypeptide is Beta-galactoside-specific lectin 4 (Viscum album (European mistletoe)).